We begin with the raw amino-acid sequence, 512 residues long: MKSKKQTKLLLILDGWGYSKTTKNNAIALANTSVWDRLNQTFPHSLIHTSGKDVGLPGKQMGNSEVGHLNLGAGRIVKQDFTRIYNELQNGDFFRNPILRNSLEYANDNNKAIHIMGLLSDGGVHSHEEQIHAMLEMTSRQGCKNVYLHIFTDGRDCAQKSAKKYIKKLESKMKELNTGEIVSLIGRYFSMDRDNRWSRIRYAYELIAKGKAKFLAKSALNAIELAYARGETDEFIQSTSIKAPTSIKKGDVLILMNYRADRARQITCAFTDEDFQGFSRGTFVPTQFVCLTEYKKDFNLPVAYPSSKLNNVLGKYLSNLGMTQLRIAETEKYAHVTFFLNGGIEQAFNGEERVLIPSPDVATYDLQPEMSAFELTDALVENIESQKYDLIICNFANTDMVGHSGKLDATIKAVEAVDTCLGIIYKAMFAIGGEMLITADHGNAEQMINPQTNEVHTAHTNNPVPLIFVSNRKADIMKPGKGALSDIAPTLLAMMDIEKPDEMTGNSLLTFK.

The Mn(2+) site is built by D14 and S64. The active-site Phosphoserine intermediate is the S64. Substrate contacts are provided by residues H125, 155–156 (RD), R187, R193, 259–262 (RADR), and K332. Residues D399, H403, D440, H441, and H459 each coordinate Mn(2+).

This sequence belongs to the BPG-independent phosphoglycerate mutase family. As to quaternary structure, monomer. It depends on Mn(2+) as a cofactor.

The enzyme catalyses (2R)-2-phosphoglycerate = (2R)-3-phosphoglycerate. It functions in the pathway carbohydrate degradation; glycolysis; pyruvate from D-glyceraldehyde 3-phosphate: step 3/5. Functionally, catalyzes the interconversion of 2-phosphoglycerate and 3-phosphoglycerate. In Vesicomyosocius okutanii subsp. Calyptogena okutanii (strain HA), this protein is 2,3-bisphosphoglycerate-independent phosphoglycerate mutase.